A 493-amino-acid polypeptide reads, in one-letter code: Glycogen synthase 1 (493 aa).

Lys15 is an ADP-alpha-D-glucose binding site.

It belongs to the glycosyltransferase 1 family. Bacterial/plant glycogen synthase subfamily.

The enzyme catalyses [(1-&gt;4)-alpha-D-glucosyl](n) + ADP-alpha-D-glucose = [(1-&gt;4)-alpha-D-glucosyl](n+1) + ADP + H(+). Its pathway is glycan biosynthesis; glycogen biosynthesis. Functionally, synthesizes alpha-1,4-glucan chains using ADP-glucose. The sequence is that of Glycogen synthase 1 from Methylococcus capsulatus (strain ATCC 33009 / NCIMB 11132 / Bath).